The chain runs to 551 residues: Arginine--tRNA ligase (551 aa).

A 'HIGH' region motif is present at residues 123 to 133 (ANPTGPLTIGR).

The protein belongs to the class-I aminoacyl-tRNA synthetase family. As to quaternary structure, monomer.

The protein resides in the cytoplasm. It catalyses the reaction tRNA(Arg) + L-arginine + ATP = L-arginyl-tRNA(Arg) + AMP + diphosphate. The chain is Arginine--tRNA ligase from Chlorobium phaeobacteroides (strain DSM 266 / SMG 266 / 2430).